Here is a 319-residue protein sequence, read N- to C-terminus: Biotin synthase (319 aa).

The Radical SAM core domain maps to 44-273 (IHGDGIDLCS…EAKIRLAGGR (230 aa)). The [4Fe-4S] cluster site is built by Cys-62, Cys-66, and Cys-69. Ser-106, Cys-138, Cys-198, and Arg-268 together coordinate [2Fe-2S] cluster.

This sequence belongs to the radical SAM superfamily. Biotin synthase family. In terms of assembly, homodimer. [4Fe-4S] cluster is required as a cofactor. [2Fe-2S] cluster serves as cofactor.

The catalysed reaction is (4R,5S)-dethiobiotin + (sulfur carrier)-SH + 2 reduced [2Fe-2S]-[ferredoxin] + 2 S-adenosyl-L-methionine = (sulfur carrier)-H + biotin + 2 5'-deoxyadenosine + 2 L-methionine + 2 oxidized [2Fe-2S]-[ferredoxin]. It participates in cofactor biosynthesis; biotin biosynthesis; biotin from 7,8-diaminononanoate: step 2/2. In terms of biological role, catalyzes the conversion of dethiobiotin (DTB) to biotin by the insertion of a sulfur atom into dethiobiotin via a radical-based mechanism. This Clostridium perfringens (strain 13 / Type A) protein is Biotin synthase.